Reading from the N-terminus, the 573-residue chain is LysM domain-containing protein ARB_01155/01156 (573 aa).

The first 18 residues, 1 to 18, serve as a signal peptide directing secretion; it reads MIPRNLISGLFLLPFVVA. N-linked (GlcNAc...) asparagine glycosylation is found at Asn-46, Asn-71, and Asn-283. The LysM domain maps to 373–419; that stretch reads RYYEVVAGDQCNTIALHFGITVDAFLSLNTQIDERCSNLWIAYAYCV. The lysM domain stretch occupies residues 375-405; it reads YEVVAGDQCNTIALHFGITVDAFLSLNTQID.

The protein localises to the secreted. Its function is as follows. Might have a role in sequestration of chitin oligosaccharides (breakdown products of fungal cell walls that are released during invasion and act as triggers of host immunity) to dampen host defense. The protein is LysM domain-containing protein ARB_01155/01156 of Arthroderma benhamiae (strain ATCC MYA-4681 / CBS 112371) (Trichophyton mentagrophytes).